Here is a 376-residue protein sequence, read N- to C-terminus: Chaperone protein DnaJ (376 aa).

The 65-residue stretch at 5–69 folds into the J domain; sequence DYYEVLGISK…QKRAQYDQYG (65 aa). The CR-type zinc-finger motif lies at 133–215; the sequence is GKDAEIEIPR…CHGKGRVTKT (83 aa). The Zn(2+) site is built by C146, C149, C163, C166, C189, C192, C203, and C206. CXXCXGXG motif repeat units lie at residues 146-153, 163-170, 189-196, and 203-210; these read CDTCHGSG, CSHCGGKG, CQYCNGTG, and CPTCHGKG.

It belongs to the DnaJ family. In terms of assembly, homodimer. It depends on Zn(2+) as a cofactor.

The protein localises to the cytoplasm. Its function is as follows. Participates actively in the response to hyperosmotic and heat shock by preventing the aggregation of stress-denatured proteins and by disaggregating proteins, also in an autonomous, DnaK-independent fashion. Unfolded proteins bind initially to DnaJ; upon interaction with the DnaJ-bound protein, DnaK hydrolyzes its bound ATP, resulting in the formation of a stable complex. GrpE releases ADP from DnaK; ATP binding to DnaK triggers the release of the substrate protein, thus completing the reaction cycle. Several rounds of ATP-dependent interactions between DnaJ, DnaK and GrpE are required for fully efficient folding. Also involved, together with DnaK and GrpE, in the DNA replication of plasmids through activation of initiation proteins. The protein is Chaperone protein DnaJ of Listeria monocytogenes serotype 4a (strain HCC23).